The primary structure comprises 141 residues: HTH-type transcriptional repressor NsrR (141 aa).

An HTH rrf2-type domain is found at 2 to 129 (QLTNFTDFGL…DKHTIQDMLT (128 aa)). Residues 28-51 (ITVVTETFDVSRNHMVKIINKLGQ) constitute a DNA-binding region (H-T-H motif). Cysteine 91, cysteine 96, and cysteine 102 together coordinate [2Fe-2S] cluster.

The cofactor is [2Fe-2S] cluster.

In terms of biological role, nitric oxide-sensitive repressor of genes involved in protecting the cell against nitrosative stress. May require iron for activity. In Aliivibrio fischeri (strain ATCC 700601 / ES114) (Vibrio fischeri), this protein is HTH-type transcriptional repressor NsrR.